The sequence spans 118 residues: Large ribosomal subunit protein bL20 (118 aa).

It belongs to the bacterial ribosomal protein bL20 family.

Its function is as follows. Binds directly to 23S ribosomal RNA and is necessary for the in vitro assembly process of the 50S ribosomal subunit. It is not involved in the protein synthesizing functions of that subunit. The polypeptide is Large ribosomal subunit protein bL20 (Clostridioides difficile (strain 630) (Peptoclostridium difficile)).